The following is a 326-amino-acid chain: Probable cell division protein WhiA (326 aa).

A DNA-binding region (H-T-H motif) is located at residues 275–308; it reads SLEELGQLADPPLTKDAIAGRIRRLLAMADKRAA.

The protein belongs to the WhiA family.

In terms of biological role, involved in cell division and chromosome segregation. The protein is Probable cell division protein WhiA of Thermobifida fusca (strain YX).